A 753-amino-acid polypeptide reads, in one-letter code: Protein-lysine N-methyltransferase SMYD4 (753 aa).

112 to 114 (RSA) contributes to the S-adenosyl-L-methionine binding site. Residues 186-528 (DGVSVYFSSD…AGQEILHCYG (343 aa)) enclose the SET domain. Residues cysteine 246, cysteine 249, cysteine 259, cysteine 262, cysteine 268, cysteine 272, histidine 281, and cysteine 285 each contribute to the Zn(2+) site. The MYND-type zinc-finger motif lies at 246-285 (CHHCLSQSLSFVPCPKCSYARYCGESCQKDAWDQWHQWEC). S-adenosyl-L-methionine is bound by residues 467–468 (NH) and tyrosine 527.

Belongs to the class V-like SAM-binding methyltransferase superfamily.

The protein localises to the nucleus. It localises to the cytoplasm. The catalysed reaction is L-lysyl-[protein] + S-adenosyl-L-methionine = N(6)-methyl-L-lysyl-[protein] + S-adenosyl-L-homocysteine + H(+). Protein-lysine N-methyltransferase. Monomethylates PRMT5, modulating its transcriptional activity. May also act as a histone methyltransferase. Plays a critical role in cardiac development. Acts as a key epigenetic regulator of gene expression during cardiac development via its dual activities as a methyltransferase and negative regulator of HDAC1. This is Protein-lysine N-methyltransferase SMYD4 (smyd4) from Danio rerio (Zebrafish).